The following is a 214-amino-acid chain: Pyrrolidone-carboxylate peptidase (214 aa).

Active-site residues include glutamate 79, cysteine 142, and histidine 166.

This sequence belongs to the peptidase C15 family. In terms of assembly, homotetramer.

The protein localises to the cytoplasm. It catalyses the reaction Release of an N-terminal pyroglutamyl group from a polypeptide, the second amino acid generally not being Pro.. Removes 5-oxoproline from various penultimate amino acid residues except L-proline. The chain is Pyrrolidone-carboxylate peptidase from Fusobacterium nucleatum subsp. nucleatum (strain ATCC 25586 / DSM 15643 / BCRC 10681 / CIP 101130 / JCM 8532 / KCTC 2640 / LMG 13131 / VPI 4355).